The following is a 522-amino-acid chain: ATP synthase subunit alpha, mitochondrial (522 aa).

172-179 (GDRQTGKT) provides a ligand contact to ATP.

It belongs to the ATPase alpha/beta chains family. In terms of assembly, F-type ATPases have 2 components, CF(1) - the catalytic core - and CF(0) - the membrane proton channel. CF(1) has five subunits: alpha(3), beta(3), gamma(1), delta(1), epsilon(1). CF(0) has three main subunits: a, b and c.

It is found in the mitochondrion. The protein localises to the mitochondrion inner membrane. Mitochondrial membrane ATP synthase (F(1)F(0) ATP synthase or Complex V) produces ATP from ADP in the presence of a proton gradient across the membrane which is generated by electron transport complexes of the respiratory chain. F-type ATPases consist of two structural domains, F(1) - containing the extramembraneous catalytic core, and F(0) - containing the membrane proton channel, linked together by a central stalk and a peripheral stalk. During catalysis, ATP synthesis in the catalytic domain of F(1) is coupled via a rotary mechanism of the central stalk subunits to proton translocation. Subunits alpha and beta form the catalytic core in F(1). Rotation of the central stalk against the surrounding alpha(3)beta(3) subunits leads to hydrolysis of ATP in three separate catalytic sites on the beta subunits. Subunit alpha does not bear the catalytic high-affinity ATP-binding sites. The chain is ATP synthase subunit alpha, mitochondrial (ATP1) from Acanthamoeba castellanii (Amoeba).